A 182-amino-acid chain; its full sequence is Large ribosomal subunit protein bL25 (182 aa).

This sequence belongs to the bacterial ribosomal protein bL25 family. CTC subfamily. As to quaternary structure, part of the 50S ribosomal subunit; part of the 5S rRNA/L5/L18/L25 subcomplex. Contacts the 5S rRNA. Binds to the 5S rRNA independently of L5 and L18.

Functionally, this is one of the proteins that binds to the 5S RNA in the ribosome where it forms part of the central protuberance. The sequence is that of Large ribosomal subunit protein bL25 from Borrelia duttonii (strain Ly).